The sequence spans 1759 residues: Zinc finger protein castor homolog 1 (1759 aa).

Disordered regions lie at residues methionine 1–lysine 26 and lysine 46–arginine 175. 2 stretches are compositionally biased toward basic and acidic residues: residues proline 77–isoleucine 88 and glutamate 137–serine 160. The segment covering glycine 161–alanine 171 has biased composition (polar residues). A Glycyl lysine isopeptide (Lys-Gly) (interchain with G-Cter in SUMO2) cross-link involves residue lysine 288. A disordered region spans residues serine 374 to leucine 420. Residues alanine 387–alanine 396 show a composition bias toward pro residues. Positions proline 397–alanine 406 are enriched in low complexity. Positions proline 407 to proline 417 are enriched in pro residues. 3 C2H2-type zinc fingers span residues tyrosine 551–histidine 575, phenylalanine 610–histidine 634, and phenylalanine 668–histidine 692. Disordered stretches follow at residues threonine 686 to aspartate 723, serine 736 to leucine 776, valine 824 to glycine 843, and alanine 889 to alanine 949. Residues serine 687–arginine 698 are compositionally biased toward basic residues. Residues serine 699–alanine 712 are compositionally biased toward low complexity. Residues serine 720 and serine 721 each carry the phosphoserine modification. Low complexity predominate over residues serine 736 to alanine 764. Basic and acidic residues predominate over residues alanine 925–serine 939. Lysine 975 participates in a covalent cross-link: Glycyl lysine isopeptide (Lys-Gly) (interchain with G-Cter in SUMO2). Serine 981 is modified (phosphoserine). The C2H2-type 4 zinc finger occupies phenylalanine 1031–histidine 1055. The disordered stretch occupies residues threonine 1067–proline 1111. Pro residues predominate over residues proline 1081–proline 1091. The C2H2-type 5 zinc finger occupies phenylalanine 1300–histidine 1324. Residues glutamate 1367–serine 1392 form a disordered region. 3 C2H2-type zinc fingers span residues tyrosine 1457–histidine 1481, phenylalanine 1515–histidine 1537, and phenylalanine 1571–histidine 1595. Disordered regions lie at residues aspartate 1589 to leucine 1620 and leucine 1643 to arginine 1736. Over residues alanine 1655 to serine 1673 the composition is skewed to low complexity. A compositionally biased stretch (acidic residues) spans serine 1674–leucine 1723. A compositionally biased stretch (low complexity) spans proline 1724–arginine 1736.

Expressed in heart, lung, skeletal muscle, pancreas, testis, small intestine, and stomach, but it is not detectable in the adult brain.

The protein resides in the nucleus. Its function is as follows. Transcriptional activator. Involved in vascular assembly and morphogenesis through direct transcriptional regulation of EGFL7. The protein is Zinc finger protein castor homolog 1 (CASZ1) of Homo sapiens (Human).